The following is a 425-amino-acid chain: UDP-N-acetylglucosamine 1-carboxyvinyltransferase (425 aa).

22–23 lines the phosphoenolpyruvate pocket; it reads KN. Arginine 91 provides a ligand contact to UDP-N-acetyl-alpha-D-glucosamine. The Proton donor role is filled by cysteine 115. Residue cysteine 115 is modified to 2-(S-cysteinyl)pyruvic acid O-phosphothioketal. UDP-N-acetyl-alpha-D-glucosamine is bound by residues 120 to 124, aspartate 309, and isoleucine 331; that span reads RPVDL.

It belongs to the EPSP synthase family. MurA subfamily.

The protein localises to the cytoplasm. The catalysed reaction is phosphoenolpyruvate + UDP-N-acetyl-alpha-D-glucosamine = UDP-N-acetyl-3-O-(1-carboxyvinyl)-alpha-D-glucosamine + phosphate. It participates in cell wall biogenesis; peptidoglycan biosynthesis. Cell wall formation. Adds enolpyruvyl to UDP-N-acetylglucosamine. The chain is UDP-N-acetylglucosamine 1-carboxyvinyltransferase from Akkermansia muciniphila (strain ATCC BAA-835 / DSM 22959 / JCM 33894 / BCRC 81048 / CCUG 64013 / CIP 107961 / Muc).